A 124-amino-acid chain; its full sequence is Small ribosomal subunit protein eS25 (124 aa).

The segment covering 1–22 (MPPKDSKQKKDTSKAKKDKDPV) has biased composition (basic and acidic residues). The disordered stretch occupies residues 1–37 (MPPKDSKQKKDTSKAKKDKDPVNKSGGKAKKKKWSKG). The segment covering 27–37 (GKAKKKKWSKG) has biased composition (basic residues).

It belongs to the eukaryotic ribosomal protein eS25 family. In terms of assembly, component of the small ribosomal subunit.

It is found in the cytoplasm. Its function is as follows. Component of the small ribosomal subunit. The ribosome is a large ribonucleoprotein complex responsible for the synthesis of proteins in the cell. This chain is Small ribosomal subunit protein eS25 (rps25), found in Ictalurus punctatus (Channel catfish).